A 347-amino-acid polypeptide reads, in one-letter code: Quinolinate synthase (347 aa).

Residues His47 and Ser68 each contribute to the iminosuccinate site. Cys113 contributes to the [4Fe-4S] cluster binding site. Iminosuccinate contacts are provided by residues Tyr139 to Asn141 and Ser156. [4Fe-4S] cluster is bound at residue Cys200. Residues His226–Glu228 and Thr243 contribute to the iminosuccinate site. Residue Cys297 participates in [4Fe-4S] cluster binding.

This sequence belongs to the quinolinate synthase family. Type 1 subfamily. It depends on [4Fe-4S] cluster as a cofactor.

It localises to the cytoplasm. The enzyme catalyses iminosuccinate + dihydroxyacetone phosphate = quinolinate + phosphate + 2 H2O + H(+). It functions in the pathway cofactor biosynthesis; NAD(+) biosynthesis; quinolinate from iminoaspartate: step 1/1. Catalyzes the condensation of iminoaspartate with dihydroxyacetone phosphate to form quinolinate. In Salmonella heidelberg (strain SL476), this protein is Quinolinate synthase.